We begin with the raw amino-acid sequence, 795 residues long: Arcadin-4 (795 aa).

Coiled coils occupy residues 205–253 (YSGL…HEQI), 323–412 (YDAL…YTSL), and 450–618 (FGGV…LKKR).

It localises to the cytoplasm. The protein localises to the cytoskeleton. Its function is as follows. Part of an actin-like archaeal cytoskeleton. The sequence is that of Arcadin-4 from Pyrobaculum calidifontis (strain DSM 21063 / JCM 11548 / VA1).